The sequence spans 412 residues: MTSIPLGPPQPPSLAPQPPHLHGGDSLKRRPDIDNDKEMSAAVIEGNDAVTGHIISTTIGGKNGEPKQTISYMAERVVGTGSFGIVFQAKCLETGESVAIKKVLQDRRYKNRELQLMRLMDHPNVVSLKHCFFSTTTRDELFLNLVMEYVPETLYRVLKHYTSSNQRMPIFYVKLYTYQIFRGLAYIHTAPGVCHRDVKPQNLLVDPLTHQCKLCDFGSAKVLVKGEANISYICSRYYRAPELIFGATEYTSSIDIWSAGCVLAELLLGQPLFPGENSVDQLVEIIKVLGTPTREEIRCMNPNYTDFRFPQIKAHPWHKVFHKRMPPEAIDLASRLLQYSPSLRCTALEACAHPFFNELREPNARLPNGRPLPPLFNFKQELSGASPELINRLIPEHVRRQMNGGFPFQAGP.

Positions 1–19 (MTSIPLGPPQPPSLAPQPP) are enriched in pro residues. The tract at residues 1 to 33 (MTSIPLGPPQPPSLAPQPPHLHGGDSLKRRPDI) is disordered. Over residues 22–33 (HGGDSLKRRPDI) the composition is skewed to basic and acidic residues. S26 is subject to Phosphoserine. The Protein kinase domain occupies 72–356 (YMAERVVGTG…ALEACAHPFF (285 aa)). ATP-binding positions include 78 to 86 (VGTGSFGIV) and K101. S127 carries the post-translational modification Phosphoserine. T136 and T137 each carry phosphothreonine. D197 (proton acceptor) is an active-site residue. At S219 the chain carries Phosphoserine. Y232 carries the phosphotyrosine modification. Phosphoserine is present on S252. T293 carries the post-translational modification Phosphothreonine. S342 is subject to Phosphoserine. Phosphothreonine is present on T346.

Belongs to the protein kinase superfamily. CMGC Ser/Thr protein kinase family. GSK-3 subfamily. As to quaternary structure, binds to KIB1. Interacts with beet curly top virus AL4/C4 and tomato golden mosaic virus AL4/AC4. In terms of processing, autophosphorylated mainly on threonine and serine residues.

It catalyses the reaction L-seryl-[protein] + ATP = O-phospho-L-seryl-[protein] + ADP + H(+). The catalysed reaction is L-threonyl-[protein] + ATP = O-phospho-L-threonyl-[protein] + ADP + H(+). Its function is as follows. May mediate extracellular signals to regulate transcription in differentiating cells. The protein is Shaggy-related protein kinase zeta (ASK6) of Arabidopsis thaliana (Mouse-ear cress).